Reading from the N-terminus, the 458-residue chain is MTLAQFGGLFVVYLIGTLFVLTLTYQEFRRVRFNFNVFFSLLYLLTFYFGFPLTCLLVFQFDVEVVPVEFLLYAILSATAFYAIYYVSYKTRLRKRSVQPRKAVFSMNRVETHLTWILLALVAIVTVGIFFLQNGFLLFKLNSYSQIFSSDVSGVALKRFFYFFIPAMLVVYFLKQDLRAWFFFLAATVAFGILTYVIVGGTRANIIIAFSLFLFIGIVRGWISLWMLVAAGVFGIVGMFWLALKRYSLDVSGPEAFYTFLYLTRDTFSPWENLALLLQNYDKIDFQGLAPIVRDFYVFIPSWLWPGRPDTVLNTANYFTWEVLDNHSGLAISPTLIGSLVVMGGALFIPVGAVLVGMIIKWFDWLYEMGKSESNRYKAAILQGFCFGAVFNIIVLAREGVDSFVSRVVFFCLIFGVCLLMAKLLYWLFDTAGLIKARVQRSRTLTPPASSVRADGLL.

A run of 11 helical transmembrane segments spans residues 3-23 (LAQF…VLTL), 37-57 (VFFS…TCLL), 65-85 (VVPV…YAIY), 112-132 (THLT…IFFL), 154-174 (GVAL…VYFL), 180-200 (AWFF…VIVG), 201-221 (GTRA…IVRG), 222-242 (WISL…MFWL), 340-360 (LVVM…GMII), 377-397 (YKAA…IVLA), and 409-429 (VFFC…YWLF).

Belongs to the WzyE family. As to quaternary structure, probably part of a complex composed of WzxE, WzyE and WzzE.

The protein localises to the cell inner membrane. Its pathway is bacterial outer membrane biogenesis; enterobacterial common antigen biosynthesis. Its function is as follows. Probably involved in the polymerization of enterobacterial common antigen (ECA) trisaccharide repeat units. This Serratia proteamaculans (strain 568) protein is Probable ECA polymerase.